The sequence spans 278 residues: 4-diphosphocytidyl-2-C-methyl-D-erythritol kinase (278 aa).

The active site involves Lys-9. Residue 89–99 (PVASGIGGGSA) coordinates ATP. Asp-128 is a catalytic residue.

This sequence belongs to the GHMP kinase family. IspE subfamily.

The enzyme catalyses 4-CDP-2-C-methyl-D-erythritol + ATP = 4-CDP-2-C-methyl-D-erythritol 2-phosphate + ADP + H(+). It functions in the pathway isoprenoid biosynthesis; isopentenyl diphosphate biosynthesis via DXP pathway; isopentenyl diphosphate from 1-deoxy-D-xylulose 5-phosphate: step 3/6. Its function is as follows. Catalyzes the phosphorylation of the position 2 hydroxy group of 4-diphosphocytidyl-2C-methyl-D-erythritol. The protein is 4-diphosphocytidyl-2-C-methyl-D-erythritol kinase of Cereibacter sphaeroides (strain KD131 / KCTC 12085) (Rhodobacter sphaeroides).